A 213-amino-acid chain; its full sequence is ATP-dependent Clp protease proteolytic subunit (213 aa).

The active-site Nucleophile is the Ser114. The active site involves His139.

Belongs to the peptidase S14 family. In terms of assembly, fourteen ClpP subunits assemble into 2 heptameric rings which stack back to back to give a disk-like structure with a central cavity, resembling the structure of eukaryotic proteasomes.

Its subcellular location is the cytoplasm. It carries out the reaction Hydrolysis of proteins to small peptides in the presence of ATP and magnesium. alpha-casein is the usual test substrate. In the absence of ATP, only oligopeptides shorter than five residues are hydrolyzed (such as succinyl-Leu-Tyr-|-NHMec, and Leu-Tyr-Leu-|-Tyr-Trp, in which cleavage of the -Tyr-|-Leu- and -Tyr-|-Trp bonds also occurs).. Cleaves peptides in various proteins in a process that requires ATP hydrolysis. Has a chymotrypsin-like activity. Plays a major role in the degradation of misfolded proteins. The sequence is that of ATP-dependent Clp protease proteolytic subunit from Methylobacillus flagellatus (strain ATCC 51484 / DSM 6875 / VKM B-1610 / KT).